Consider the following 428-residue polypeptide: Gamma-glutamyl phosphate reductase (428 aa).

Belongs to the gamma-glutamyl phosphate reductase family.

The protein localises to the cytoplasm. The catalysed reaction is L-glutamate 5-semialdehyde + phosphate + NADP(+) = L-glutamyl 5-phosphate + NADPH + H(+). The protein operates within amino-acid biosynthesis; L-proline biosynthesis; L-glutamate 5-semialdehyde from L-glutamate: step 2/2. In terms of biological role, catalyzes the NADPH-dependent reduction of L-glutamate 5-phosphate into L-glutamate 5-semialdehyde and phosphate. The product spontaneously undergoes cyclization to form 1-pyrroline-5-carboxylate. In Streptomyces avermitilis (strain ATCC 31267 / DSM 46492 / JCM 5070 / NBRC 14893 / NCIMB 12804 / NRRL 8165 / MA-4680), this protein is Gamma-glutamyl phosphate reductase.